The following is a 357-amino-acid chain: Peptide chain release factor 1 (357 aa).

Position 235 is an N5-methylglutamine (Gln235).

This sequence belongs to the prokaryotic/mitochondrial release factor family. In terms of processing, methylated by PrmC. Methylation increases the termination efficiency of RF1.

The protein resides in the cytoplasm. Its function is as follows. Peptide chain release factor 1 directs the termination of translation in response to the peptide chain termination codons UAG and UAA. This Alkaliphilus metalliredigens (strain QYMF) protein is Peptide chain release factor 1.